Consider the following 109-residue polypeptide: uncharacterized protein (109 aa).

Residues 1–22 (MKPYSTLFLFTLLTLTTVPAQA) form the signal peptide. The interval 39–109 (AYNPDHGRDY…ERRMEDEYGQ (71 aa)) is disordered. Residues 41 to 109 (NPDHGRDYED…ERRMEDEYGQ (69 aa)) show a composition bias toward basic and acidic residues.

This is an uncharacterized protein from Shigella dysenteriae serotype 1 (strain Sd197).